The following is a 31-amino-acid chain: MPTITSYFGFLLAALTITSALFIGLSKIRLI.

The chain crosses the membrane as a helical span at residues 4-24 (ITSYFGFLLAALTITSALFIG).

This sequence belongs to the PetL family. In terms of assembly, the 4 large subunits of the cytochrome b6-f complex are cytochrome b6, subunit IV (17 kDa polypeptide, PetD), cytochrome f and the Rieske protein, while the 4 small subunits are PetG, PetL, PetM and PetN. The complex functions as a dimer.

It localises to the plastid. Its subcellular location is the chloroplast thylakoid membrane. In terms of biological role, component of the cytochrome b6-f complex, which mediates electron transfer between photosystem II (PSII) and photosystem I (PSI), cyclic electron flow around PSI, and state transitions. PetL is important for photoautotrophic growth as well as for electron transfer efficiency and stability of the cytochrome b6-f complex. The protein is Cytochrome b6-f complex subunit 6 of Gossypium hirsutum (Upland cotton).